Here is a 394-residue protein sequence, read N- to C-terminus: Subtilisin-like protease CPC735_005570 (394 aa).

An N-terminal signal peptide occupies residues 1–21; sequence MRAIISVALFLSLSLLSAVNA. Residues 22-114 constitute a propeptide that is removed on maturation; that stretch reads AEILSAGDTD…IEHDRIANAR (93 aa). In terms of domain architecture, Inhibitor I9 spans 37-110; the sequence is SYIVVMRDGL…AVKYIEHDRI (74 aa). The 272-residue stretch at 123–394 folds into the Peptidase S8 domain; sequence GWNLARISHK…RLLLYNGSGR (272 aa). Catalysis depends on charge relay system residues Asp155 and His186. Asn216 and Asn247 each carry an N-linked (GlcNAc...) asparagine glycan. Catalysis depends on Ser340, which acts as the Charge relay system. Residues Asn382 and Asn390 are each glycosylated (N-linked (GlcNAc...) asparagine).

This sequence belongs to the peptidase S8 family.

It is found in the secreted. Functionally, secreted subtilisin-like serine protease with keratinolytic activity that contributes to pathogenicity. This is Subtilisin-like protease CPC735_005570 from Coccidioides posadasii (strain C735) (Valley fever fungus).